A 147-amino-acid polypeptide reads, in one-letter code: Deoxyuridine 5'-triphosphate nucleotidohydrolase (147 aa).

Substrate contacts are provided by residues 68 to 70, Asn-81, and 85 to 87; these read RSG and TID.

It belongs to the dUTPase family. The cofactor is Mg(2+).

It catalyses the reaction dUTP + H2O = dUMP + diphosphate + H(+). The protein operates within pyrimidine metabolism; dUMP biosynthesis; dUMP from dCTP (dUTP route): step 2/2. Its function is as follows. This enzyme is involved in nucleotide metabolism: it produces dUMP, the immediate precursor of thymidine nucleotides and it decreases the intracellular concentration of dUTP so that uracil cannot be incorporated into DNA. The chain is Deoxyuridine 5'-triphosphate nucleotidohydrolase from Solibacter usitatus (strain Ellin6076).